The sequence spans 612 residues: Polyadenylation factor subunit 2 (612 aa).

Positions 1 to 21 (MAYEPRGDHGGGGGGQGQDGA) are disordered. WD repeat units lie at residues 93-132 (KIKHPINVVRWTPEGRRLLTASTSGEFTLWNGTGFNFETI), 135-175 (AHDS…QSIN), 177-215 (HTDPIRDLAFSPSDSKFVTASDDSTLKIFDFALGQMESK), 218-257 (GHGWDAKSVDWHPTKGLLVSGSKDHLVKLWDPRTSRCLTT), 260-300 (GHKS…DICL), 303-345 (GHEK…PGQS), and 373-412 (AHDYAIWSLDWHPLGHILASGSNDRITRFWSRARPGDAEV). 3 disordered regions span residues 424-450 (AEAQGTWDRRGGRRQRQEEEQQEMEDE), 486-514 (PPPPIPGVGAGGPPPPLPFPLPGLNGSLP), and 544-612 (PPPG…TRAR). Residues 430-442 (WDRRGGRRQRQEE) show a composition bias toward basic and acidic residues. 2 stretches are compositionally biased toward pro residues: residues 486–506 (PPPPIPGVGAGGPPPPLPFPL) and 544–575 (PPPGALPPGLLPPGGIPPPPGGFGMPIPPPPM).

The protein resides in the nucleus. Its function is as follows. Required for 3'-end cleavage and polyadenylation of pre-mRNAs. Also involved in chromosome segregation where it has a role in chromosome attachment to the mitotic spindle. This Gibberella zeae (strain ATCC MYA-4620 / CBS 123657 / FGSC 9075 / NRRL 31084 / PH-1) (Wheat head blight fungus) protein is Polyadenylation factor subunit 2 (PFS2).